The chain runs to 583 residues: Poly [ADP-ribose] polymerase 2 (583 aa).

Residues 1 to 77 (MAARRRRSTG…GMPGRSWASK (77 aa)) form a disordered region. Residues 1-103 (MAARRRRSTG…VDPECTAKVG (103 aa)) are N-terminal region (NTR). 2 consecutive short sequence motifs (nuclear localization signal) follow at residues 21–22 (KR) and 35–40 (PAKKTR). An N6-acetyllysine mark is found at lysine 37 and lysine 38. The segment covering 57-67 (ANKDRTEDKQD) has biased composition (basic and acidic residues). The 98-residue stretch at 104–201 (KAHVYCEGND…EKFEKVPGKY (98 aa)) folds into the WGR domain. 2 positions are modified to phosphoserine: serine 226 and serine 232. A PARP alpha-helical domain is found at 231-348 (ESQLDLRVQE…DIEIAIKLVK (118 aa)). The region spanning 356–583 (HPLDQHYRNL…KVQFNFLQLW (228 aa)) is the PARP catalytic domain. Residues 428–430 (HGS), glycine 437, arginine 444, and serine 470 contribute to the NAD(+) site. Glutamate 558 (for poly [ADP-ribose] polymerase activity) is an active-site residue.

It belongs to the ARTD/PARP family. In terms of assembly, component of a base excision repair (BER) complex, containing at least XRCC1, PARP1, POLB and LRIG3. Homo- and heterodimer with PARP1. Interacts (via the PARP catalytic domain) with HPF1. Interacts with core nucleosomes. Post-translationally, auto poly-ADP-ribosylated on serine residues, leading to dissociation of the PARP2-HPF1 complex from chromatin. Poly-ADP-ribosylated by PARP1. Acetylation reduces DNA binding and enzymatic activity. In terms of processing, proteolytically cleaved by caspase-8 (CASP8) in response to apoptosis, leading to its inactivation. In terms of tissue distribution, widely expressed, mainly in actively dividing tissues. The highest levels are in the brain, heart, pancreas, skeletal muscle and testis; also detected in kidney, liver, lung, placenta, ovary and spleen; levels are low in leukocytes, colon, small intestine, prostate and thymus.

The protein localises to the nucleus. It localises to the chromosome. It catalyses the reaction NAD(+) + (ADP-D-ribosyl)n-acceptor = nicotinamide + (ADP-D-ribosyl)n+1-acceptor + H(+).. The catalysed reaction is L-seryl-[protein] + NAD(+) = O-(ADP-D-ribosyl)-L-seryl-[protein] + nicotinamide + H(+). It carries out the reaction L-aspartyl-[protein] + NAD(+) = 4-O-(ADP-D-ribosyl)-L-aspartyl-[protein] + nicotinamide. The enzyme catalyses L-glutamyl-[protein] + NAD(+) = 5-O-(ADP-D-ribosyl)-L-glutamyl-[protein] + nicotinamide. With respect to regulation, ADP-ribosyltransferase activity is regulated via an allosteric activation mechanism. In absence of activation signal, PARP2 is autoinhibited by the PARP alpha-helical domain (also named HD region), which prevents effective NAD(+)-binding. Activity is highly stimulated by signals, which unfold the PARP alpha-helical domain, relieving autoinhibition. Poly-ADP-ribosyltransferase activity is tightly regulated and PARP2 is removed from damaged chromatin following initial poly-ADP-ribosylation of chromatin to avoid prolonged residence (trapping) that has cytotoxic consequences. CHD1L promotes PARP2 removal from chromatin. ADP-ribosyltransferase activity is inhibited by a number of PARP inhibitors (PARPi) compounds, that are used the treatment of breast or ovarian cancers that have defects in DNA repair by homologous recombination. PARPi molecules (niraparib, talazoparib, and, to a lesser extent, olaparib) also trap PARP2 at DNA damage sites. Poly-ADP-ribosyltransferase that mediates poly-ADP-ribosylation of proteins and plays a key role in DNA repair. Mediates glutamate, aspartate or serine ADP-ribosylation of proteins: the ADP-D-ribosyl group of NAD(+) is transferred to the acceptor carboxyl group of target residues and further ADP-ribosyl groups are transferred to the 2'-position of the terminal adenosine moiety, building up a polymer with an average chain length of 20-30 units. Serine ADP-ribosylation of proteins constitutes the primary form of ADP-ribosylation of proteins in response to DNA damage. Mediates glutamate and aspartate ADP-ribosylation of target proteins in absence of HPF1. Following interaction with HPF1, catalyzes serine ADP-ribosylation of target proteins; HPF1 conferring serine specificity by completing the PARP2 active site. PARP2 initiates the repair of double-strand DNA breaks: recognizes and binds DNA breaks within chromatin and recruits HPF1, licensing serine ADP-ribosylation of target proteins, such as histones, thereby promoting decompaction of chromatin and the recruitment of repair factors leading to the reparation of DNA strand breaks. HPF1 initiates serine ADP-ribosylation but restricts the polymerase activity of PARP2 in order to limit the length of poly-ADP-ribose chains. Specifically mediates formation of branched poly-ADP-ribosylation. Branched poly-ADP-ribose chains are specifically recognized by some factors, such as APLF. In addition to proteins, also able to ADP-ribosylate DNA: preferentially acts on 5'-terminal phosphates at DNA strand breaks termini in nicked duplex. The protein is Poly [ADP-ribose] polymerase 2 of Homo sapiens (Human).